The following is a 67-amino-acid chain: Large ribosomal subunit protein bL35 (67 aa).

This sequence belongs to the bacterial ribosomal protein bL35 family.

This chain is Large ribosomal subunit protein bL35, found in Novosphingobium aromaticivorans (strain ATCC 700278 / DSM 12444 / CCUG 56034 / CIP 105152 / NBRC 16084 / F199).